A 198-amino-acid chain; its full sequence is Segregation and condensation protein B (198 aa).

Residues 169-198 (LADPAAEEPDQNEMDLFFDRFNQSKEQEEE) form a disordered region.

The protein belongs to the ScpB family. Homodimer. Homodimerization may be required to stabilize the binding of ScpA to the Smc head domains. Component of a cohesin-like complex composed of ScpA, ScpB and the Smc homodimer, in which ScpA and ScpB bind to the head domain of Smc. The presence of the three proteins is required for the association of the complex with DNA.

The protein localises to the cytoplasm. Its function is as follows. Participates in chromosomal partition during cell division. May act via the formation of a condensin-like complex containing Smc and ScpA that pull DNA away from mid-cell into both cell halves. The protein is Segregation and condensation protein B of Listeria monocytogenes serotype 4a (strain HCC23).